The sequence spans 726 residues: MRSSSLAWALGLVALANAQGSPTQWYDSITGVTFSRFYQQDTDASWGYIFPSASGGQAPDEFIGLFQGPASAGWIGNSLGGSMRNNPLLVGWVDGSTPRISARWATDYAPPSIYSGPRLTILGSSGTNGNIQRIVYRCQNCTRWTGGAGGIPTTGSAVFGWAFHSTTKPLTPSDPSSGLYRHSHAAQYGFDIGNARTTLYDYYLQQLTNAPPLSGGAPTQPPTQQPPTTTAPPPPPPSSTFVSCPGAPQPRYQMNVANGFRVAPVLGGLTMPRGITLDTRGNLLVVERGRGLTGHTLDANGCVTSSKVVIQDTQINHGIDVHPSGRRIIASSGDIAWSWDYDPATMTATNRRTLVTGMNNFYHFTRTVHISRKYPNLFALNVGSDGNIDVPTRQQNSGRAQIRVFDYDQLPQNGVPFVSQYGRVLGYGLRNDVGITEDRAGNIHSIENSLDNAYRMVNGQRRDIHTNNPAEKVYNLGDPSNPRAIFGGYPDCYTVWEPSDFTDSPKQPGDWFTQDNSGQYTDAWCNANAVKPTLLLPPHTAPLDMKFGLGNDTNLYVALHGSWNRQPPQGYKVVVVPGQYSASGEWSPTAPLAQSRTAWSDLLTNRNENQCSGFGNANCFRPVGLVWSADGQNLYVSSDTSGEVFIIKRMSGPIVQPPITQPPITTSPPTPTTPPVVQPPTTVAPPQASQTLWGQCGGQGWTGPTLCPANSVCRESNQWYSQCVPA.

The signal sequence occupies residues 1–18 (MRSSSLAWALGLVALANA). 2 residues coordinate heme b: M83 and Y108. C138 and C141 form a disulfide bridge. N140 is a glycosylation site (N-linked (GlcNAc...) asparagine). Heme b-binding residues include R181 and H182. The tract at residues 211-242 (PPLSGGAPTQPPTQQPPTTTAPPPPPPSSTFV) is disordered. Positions 219–238 (TQPPTQQPPTTTAPPPPPPS) are enriched in pro residues. The cysteines at positions 244 and 302 are disulfide-linked. Pyrroloquinoline quinone is bound by residues R273, H363, R430, and N431. Ca(2+)-binding residues include S449 and D451. An intrachain disulfide couples C492 to C525. H539 is a pyrroloquinoline quinone binding site. Residue N551 is glycosylated (N-linked (GlcNAc...) asparagine). Pyrroloquinoline quinone-binding residues include H560, W563, and N564. C611 and C619 form a disulfide bridge. R621 lines the pyrroloquinoline quinone pocket. Over residues 659–678 (ITQPPITTSPPTPTTPPVVQ) the composition is skewed to pro residues. The disordered stretch occupies residues 659 to 689 (ITQPPITTSPPTPTTPPVVQPPTTVAPPQAS). The span at 679–689 (PPTTVAPPQAS) shows a compositional bias: low complexity. Positions 688 to 724 (ASQTLWGQCGGQGWTGPTLCPANSVCRESNQWYSQCV) constitute a CBM1 domain.

This sequence belongs to the sugar dehydrogenase AA12 family. Requires Ca(2+) as cofactor. Pyrroloquinoline quinone is required as a cofactor. It depends on heme b as a cofactor.

It is found in the secreted. Functionally, pyrroloquinoline quinone (PPQ)-dependent oxidoreductase that catalyzes the oxidation of various sugars including L-galactose, L-gulose, D-talose, D-arabinose, D-lyxose, L-fucose and D-glucosone. Shows significant activity toward the reverse-chair conformation of pyranoses. Shows little or no activity toward abundant sugars such as D-glucose, D-fructose, cellobiose, as well L-xylose and L-glucose. This enzyme is able to direct electrical communication with electrodes, without artificial electron mediators, thus allowing direct electron transfer (DET)-type bioelectrocatalysis. Exhibits binding affinity for insoluble cellulose. PDH does not oxidize cello-oligosaccharides but is able to activate the C-1-oxidizing Neurospora crassa LPMO9F and the C-4-oxidizing Neurospora crassa LPMO9C thanks to the electron-tranfer activity of the cytochrome domain and the localization of PDH in the vicinity of the LPMO substrates by the CBM1 domain. This is Pyrroloquinoline quinone-dependent pyranose dehydrogenase from Coprinopsis cinerea (strain Okayama-7 / 130 / ATCC MYA-4618 / FGSC 9003) (Inky cap fungus).